The primary structure comprises 217 residues: Adenylate kinase (217 aa).

Gly-10–Thr-15 contributes to the ATP binding site. Positions Ser-30–Val-59 are NMP. Residues Thr-31, Arg-36, Gly-57 to Val-59, Gly-85 to Arg-88, and Gln-92 each bind AMP. The interval Gly-122 to Asp-159 is LID. ATP contacts are provided by residues Arg-123 and Thr-132–Tyr-133. Residues Arg-156 and Arg-167 each contribute to the AMP site. Gly-203 provides a ligand contact to ATP.

Belongs to the adenylate kinase family. As to quaternary structure, monomer.

The protein localises to the cytoplasm. The enzyme catalyses AMP + ATP = 2 ADP. Its pathway is purine metabolism; AMP biosynthesis via salvage pathway; AMP from ADP: step 1/1. Catalyzes the reversible transfer of the terminal phosphate group between ATP and AMP. Plays an important role in cellular energy homeostasis and in adenine nucleotide metabolism. The chain is Adenylate kinase from Methylibium petroleiphilum (strain ATCC BAA-1232 / LMG 22953 / PM1).